A 433-amino-acid polypeptide reads, in one-letter code: C2H2 type master regulator of conidiophore development brlA (433 aa).

Disordered stretches follow at residues Pro-23–Ser-54 and Thr-238–Gly-268. Residues Thr-30 to Ser-48 are compositionally biased toward low complexity. The segment covering Thr-238–Ser-264 has biased composition (polar residues). 2 C2H2-type zinc fingers span residues Phe-321–His-345 and His-351–His-376. Residues Glu-391 to Cys-423 form a disordered region.

It is found in the nucleus. In terms of biological role, brlA, abaA and wetA are pivotal regulators of conidiophore development and conidium maturation. They act individually and together to regulate their own expression and that of numerous other sporulation-specific genes. Binds promoters of target genes at brlA response elements (BREs) containing the conserved sequence 5'-(C/A)(A/G)AGGG(G/A)-3'. The sequence is that of C2H2 type master regulator of conidiophore development brlA from Penicillium camemberti (strain FM 013).